Here is a 743-residue protein sequence, read N- to C-terminus: Envelope glycoprotein H (743 aa).

The first 23 residues, 1-23 (MRPGLPPYLTVFTVYLLSHLPSQ), serve as a signal peptide directing secretion. Residues 24–720 (RYGADAASEA…VVDATDSRLL (697 aa)) are Virion surface-facing. N-linked (GlcNAc...) asparagine; by host glycans are attached at residues Asn-56, Asn-63, Asn-68, and Asn-193. An interaction with gL region spans residues 218 to 281 (YLMDELRYVK…QTEKHELLVL (64 aa)). Residues Asn-642 and Asn-701 are each glycosylated (N-linked (GlcNAc...) asparagine; by host). A helical transmembrane segment spans residues 721–741 (MMSVYALSAIIGIYLLYRMLK). Topologically, residues 742-743 (TC) are intravirion.

The protein belongs to the herpesviridae glycoprotein H family. Interacts with glycoprotein L (gL); this interaction is necessary for the correct processing and cell surface expression of gH. The heterodimer gH/gL seems to interact with gB trimers during fusion. Forms the envelope pentamer complex (PC) composed of gH, gL, UL128, UL130, and UL131A. The pentamer interacts with host NRP2. Forms the envelope trimer complex composed of gH, gL, and gO. The trimer interacts with host PDGFRA. The trimer also interacts with host EPHA2. Interacts with UL116. Post-translationally, N-glycosylated, O-glycosylated, and sialylated.

It localises to the virion membrane. It is found in the host cell membrane. The protein localises to the host endosome membrane. Its function is as follows. The heterodimer glycoprotein H-glycoprotein L is required for the fusion of viral and plasma membranes leading to virus entry into the host cell. Following initial binding to host receptor, membrane fusion is mediated by the fusion machinery composed of gB and the heterodimer gH/gL. May also be involved in the fusion between the virion envelope and the outer nuclear membrane during virion morphogenesis. In human cytomegalovirus, forms two distincts complexes to mediate viral entry, a trimer and a pentamer at the surface of the virion envelope. The gH-gL-gO trimer is required for infection in fibroblasts by interacting with host PDGFRA, and in glioblastoma cells by interacting with host EPHA2. The gH-gL-UL128-UL130-UL131A pentamer is essential for viral entry in epithelial, endothelial and myeloid cells via interaction with host NRP2. This chain is Envelope glycoprotein H, found in Human cytomegalovirus (strain AD169) (HHV-5).